The chain runs to 678 residues: UvrABC system protein C (678 aa).

The region spanning Val16–Ile95 is the GIY-YIG domain. In terms of domain architecture, UVR spans Asp208 to Ala243. The segment at His477–Arg508 is disordered. Over residues Arg479 to Gln491 the composition is skewed to basic and acidic residues.

It belongs to the UvrC family. In terms of assembly, interacts with UvrB in an incision complex.

Its subcellular location is the cytoplasm. Functionally, the UvrABC repair system catalyzes the recognition and processing of DNA lesions. UvrC both incises the 5' and 3' sides of the lesion. The N-terminal half is responsible for the 3' incision and the C-terminal half is responsible for the 5' incision. The sequence is that of UvrABC system protein C from Mycolicibacterium vanbaalenii (strain DSM 7251 / JCM 13017 / BCRC 16820 / KCTC 9966 / NRRL B-24157 / PYR-1) (Mycobacterium vanbaalenii).